Reading from the N-terminus, the 178-residue chain is Ribosome maturation factor RimP (178 aa).

This sequence belongs to the RimP family.

The protein localises to the cytoplasm. In terms of biological role, required for maturation of 30S ribosomal subunits. This is Ribosome maturation factor RimP from Streptococcus pyogenes serotype M3 (strain ATCC BAA-595 / MGAS315).